The sequence spans 55 residues: ATP synthase F(0) complex subunit 8 (55 aa).

A helical membrane pass occupies residues 7–24 (APWFSIMIMTWLTLALLI). The segment at 34–55 (TNPPSSKPSLTTKPTPWAWPWT) is disordered.

The protein belongs to the ATPase protein 8 family. As to quaternary structure, component of the ATP synthase complex composed at least of ATP5F1A/subunit alpha, ATP5F1B/subunit beta, ATP5MC1/subunit c (homooctomer), MT-ATP6/subunit a, MT-ATP8/subunit 8, ATP5ME/subunit e, ATP5MF/subunit f, ATP5MG/subunit g, ATP5MK/subunit k, ATP5MJ/subunit j, ATP5F1C/subunit gamma, ATP5F1D/subunit delta, ATP5F1E/subunit epsilon, ATP5PF/subunit F6, ATP5PB/subunit b, ATP5PD/subunit d, ATP5PO/subunit OSCP. ATP synthase complex consists of a soluble F(1) head domain (subunits alpha(3) and beta(3)) - the catalytic core - and a membrane F(0) domain - the membrane proton channel (subunits c, a, 8, e, f, g, k and j). These two domains are linked by a central stalk (subunits gamma, delta, and epsilon) rotating inside the F1 region and a stationary peripheral stalk (subunits F6, b, d, and OSCP).

The protein localises to the mitochondrion membrane. Functionally, subunit 8, of the mitochondrial membrane ATP synthase complex (F(1)F(0) ATP synthase or Complex V) that produces ATP from ADP in the presence of a proton gradient across the membrane which is generated by electron transport complexes of the respiratory chain. ATP synthase complex consist of a soluble F(1) head domain - the catalytic core - and a membrane F(1) domain - the membrane proton channel. These two domains are linked by a central stalk rotating inside the F(1) region and a stationary peripheral stalk. During catalysis, ATP synthesis in the catalytic domain of F(1) is coupled via a rotary mechanism of the central stalk subunits to proton translocation. In vivo, can only synthesize ATP although its ATP hydrolase activity can be activated artificially in vitro. Part of the complex F(0) domain. In Aythya americana (Redhead), this protein is ATP synthase F(0) complex subunit 8.